A 377-amino-acid polypeptide reads, in one-letter code: Nitric oxide reductase FlRd-NAD(+) reductase (377 aa).

The protein belongs to the FAD-dependent oxidoreductase family. It depends on FAD as a cofactor.

It is found in the cytoplasm. It carries out the reaction 2 reduced [nitric oxide reductase rubredoxin domain] + NAD(+) + H(+) = 2 oxidized [nitric oxide reductase rubredoxin domain] + NADH. It participates in nitrogen metabolism; nitric oxide reduction. One of at least two accessory proteins for anaerobic nitric oxide (NO) reductase. Reduces the rubredoxin moiety of NO reductase. In Salmonella arizonae (strain ATCC BAA-731 / CDC346-86 / RSK2980), this protein is Nitric oxide reductase FlRd-NAD(+) reductase.